We begin with the raw amino-acid sequence, 166 residues long: Phosphopantetheine adenylyltransferase (166 aa).

Ser11 is a substrate binding site. ATP-binding positions include 11–12 and His19; that span reads SF. Residues Lys43, Ala76, and Arg90 each contribute to the substrate site. ATP-binding positions include 91–93, Glu101, and 126–132; these read GLR and LQPISSS.

This sequence belongs to the bacterial CoaD family. Homohexamer. Mg(2+) is required as a cofactor.

Its subcellular location is the cytoplasm. The enzyme catalyses (R)-4'-phosphopantetheine + ATP + H(+) = 3'-dephospho-CoA + diphosphate. Its pathway is cofactor biosynthesis; coenzyme A biosynthesis; CoA from (R)-pantothenate: step 4/5. In terms of biological role, reversibly transfers an adenylyl group from ATP to 4'-phosphopantetheine, yielding dephospho-CoA (dPCoA) and pyrophosphate. The sequence is that of Phosphopantetheine adenylyltransferase from Streptococcus equi subsp. zooepidemicus (strain MGCS10565).